Reading from the N-terminus, the 372-residue chain is Putative aminopeptidase SgcX (372 aa).

Positions 67 and 180 each coordinate a divalent metal cation. Glutamate 212 serves as the catalytic Proton acceptor. Positions 213, 235, and 329 each coordinate a divalent metal cation.

Belongs to the peptidase M42 family. It depends on a divalent metal cation as a cofactor.

The polypeptide is Putative aminopeptidase SgcX (sgcX) (Salmonella typhimurium (strain LT2 / SGSC1412 / ATCC 700720)).